A 463-amino-acid chain; its full sequence is MAKSNEGLGTGLRTRHLTMMGLGSAIGAGLFLGTGVGIRAAGPAVLLAYIIAGAIVVLVMQMLGEMAAARPASGSFSRYGEDAFGHWAGFSLGWLYWFMLIMVMGAEMTGAAAIMGAWFGVEPWIPSLVCVVFFAVVNLVAVRGFGEFEYWFAFIKVAVIIAFLIIGIALIFGWLPGSTFVGTSNFIGDHGFMPNGISGVAAGLLAVAFAFGGIEIVTIAAAESDKPREAISLAVRAVIWRISVFYLGSVLVITFLMPYESINGADTAAESPFTQILAMANIPGTVGFMEAIIVLALLSAFNAQIYATSRLVFSMANRQDAPRVFSKLSTSHVPTNAVLLSMFFAFVSVGLQYWNPAGLLDFLLNAVGGCLIVVWAMITLSQLKLRKELQANDEISTVRMWAHPWLGILTLVLLAGLVALMLGDAASRSQVYSVAIVYGFLVLLSFVTVNSPLRGGRTPSDLN.

The next 12 helical transmembrane spans lie at 18–38, 40–60, 84–104, 117–137, 157–177, 200–220, 237–257, 276–296, 337–357, 358–378, 402–422, and 431–451; these read TMMG…GVGI, AAGP…VLVM, FGHW…IMVM, AWFG…FAVV, VAVI…WLPG, VAAG…VTIA, AVIW…TFLM, ILAM…IVLA, AVLL…WNPA, GLLD…WAMI, AHPW…ALML, and VYSV…TVNS.

It belongs to the amino acid-polyamine-organocation (APC) superfamily. Amino acid transporter (AAT) (TC 2.A.3.1) family.

The protein localises to the cell membrane. It carries out the reaction L-phenylalanine(in) + H(+)(in) = L-phenylalanine(out) + H(+)(out). It catalyses the reaction L-tryptophan(in) + H(+)(in) = L-tryptophan(out) + H(+)(out). The enzyme catalyses L-tyrosine(in) + H(+)(in) = L-tyrosine(out) + H(+)(out). In terms of biological role, permease that is involved in the active transport across the cytoplasmic membrane of all three aromatic amino acids, phenylalanine, tyrosine and tryptophan. This is Aromatic amino acid transport protein AroP from Corynebacterium glutamicum (strain ATCC 13032 / DSM 20300 / JCM 1318 / BCRC 11384 / CCUG 27702 / LMG 3730 / NBRC 12168 / NCIMB 10025 / NRRL B-2784 / 534).